A 187-amino-acid polypeptide reads, in one-letter code: Protein GrpE (187 aa).

Positions Met-1–Thr-23 are disordered.

The protein belongs to the GrpE family. As to quaternary structure, homodimer.

It is found in the cytoplasm. In terms of biological role, participates actively in the response to hyperosmotic and heat shock by preventing the aggregation of stress-denatured proteins, in association with DnaK and GrpE. It is the nucleotide exchange factor for DnaK and may function as a thermosensor. Unfolded proteins bind initially to DnaJ; upon interaction with the DnaJ-bound protein, DnaK hydrolyzes its bound ATP, resulting in the formation of a stable complex. GrpE releases ADP from DnaK; ATP binding to DnaK triggers the release of the substrate protein, thus completing the reaction cycle. Several rounds of ATP-dependent interactions between DnaJ, DnaK and GrpE are required for fully efficient folding. This is Protein GrpE from Mesoplasma florum (strain ATCC 33453 / NBRC 100688 / NCTC 11704 / L1) (Acholeplasma florum).